Here is a 61-residue protein sequence, read N- to C-terminus: UPF0181 protein MS1074 (61 aa).

It belongs to the UPF0181 family.

In Mannheimia succiniciproducens (strain KCTC 0769BP / MBEL55E), this protein is UPF0181 protein MS1074.